The sequence spans 293 residues: Ribokinase (293 aa).

Substrate is bound by residues 11-13 (SMD), 39-43 (GKGAN), and E139. ATP is bound by residues N183 and 210 to 215 (TEGKQG). Residues D236 and T238 each coordinate K(+). ATP is bound by residues 241–242 (GD) and N266. D242 contacts substrate. D242 (proton acceptor) is an active-site residue. Residues S272, S275, and G277 each coordinate K(+).

It belongs to the carbohydrate kinase PfkB family. Ribokinase subfamily. In terms of assembly, homodimer. Mg(2+) serves as cofactor.

Its subcellular location is the cytoplasm. It carries out the reaction D-ribose + ATP = D-ribose 5-phosphate + ADP + H(+). It participates in carbohydrate metabolism; D-ribose degradation; D-ribose 5-phosphate from beta-D-ribopyranose: step 2/2. Activated by a monovalent cation that binds near, but not in, the active site. The most likely occupant of the site in vivo is potassium. Ion binding induces a conformational change that may alter substrate affinity. Functionally, catalyzes the phosphorylation of ribose at O-5 in a reaction requiring ATP and magnesium. The resulting D-ribose-5-phosphate can then be used either for sythesis of nucleotides, histidine, and tryptophan, or as a component of the pentose phosphate pathway. This Bacillus subtilis (strain 168) protein is Ribokinase.